The sequence spans 515 residues: Ribosome assembly protein 4 (515 aa).

An interaction with MDN1 region spans residues 20-128 (REVAIIPKDL…LLYTPRAVFK (109 aa)). Residues 29-125 (LPNVSIKFQA…QITLLYTPRA (97 aa)) are ubiquitin-like (UBL) domain. 8 WD repeats span residues 141 to 181 (GHGS…PMHT), 184 to 223 (GHYN…CLGD), 227 to 273 (GHSK…CQYT), 276 to 314 (GHTN…RCIN), 352 to 396 (AQKK…KPIA), 400 to 439 (GHQK…FIST), 442 to 481 (GHVA…LSVD), and 484 to 515 (GHKD…LWTH).

Belongs to the NLE1/RSA4 family. In terms of assembly, associates with the pre-60S ribosomal particle. Interacts (via WD repeats) with uL18 (RPL5). Interacts (via UBL domain) with MDN1 (via VWFA/MIDAS domain). Interacts (via WD repeats) with NSA2.

It is found in the nucleus. The protein localises to the nucleolus. Involved in ribosome biogenesis. Required for processing and efficient intra-nuclear transport of pre-60S ribosomal subunits. Interacts with the AAA-ATPase Midasin (MDN1/REA1), which is essential for the ATP-dependent dissociation of a group of nonribosomal factors from the pre-60S particle. This chain is Ribosome assembly protein 4, found in Saccharomyces cerevisiae (strain ATCC 204508 / S288c) (Baker's yeast).